A 510-amino-acid chain; its full sequence is Peroxidase 2 (510 aa).

An N-terminal signal peptide occupies residues Met1–Ala19. A propeptide spanning residues Leu20–Ala58 is cleaved from the precursor. Asp228 serves as the catalytic Proton acceptor. Residue His362 participates in heme binding.

As to quaternary structure, homodimer. It depends on heme b as a cofactor.

In terms of biological role, peroxidase capable of degrading beta-carotene. The chain is Peroxidase 2 from Mycetinis scorodonius (Garlic mushroom).